Reading from the N-terminus, the 363-residue chain is Galanin receptor 2a (363 aa).

The Extracellular portion of the chain corresponds to 1–23 (MNASQQIHVFSSHWKVESVIISL). A helical membrane pass occupies residues 24–44 (IFSMIFLVGTVGNCLVLAVLI). Residues 45 to 54 (RNGQMNTKST) are Cytoplasmic-facing. The chain crosses the membrane as a helical span at residues 55-75 (NLFILNLGLADLCFIVFCVPL). The Extracellular segment spans residues 76–94 (QATIYTMDEWVFGAFVCKA). The cysteines at positions 92 and 169 are disulfide-linked. Residues 95-115 (VHFIIYLTMYASIFTLAAVSL) traverse the membrane as a helical segment. The Cytoplasmic segment spans residues 116–135 (DRYLAIRYPLRSRETRTPRN). The chain crosses the membrane as a helical span at residues 136 to 156 (ALTSISLVWALSLFFSSPYLS). Residues 157–179 (YYQQMDLDGTTVCIPAWSVHHRQ) lie on the Extracellular side of the membrane. A helical membrane pass occupies residues 180–200 (AMDICTFIFGYLIPVLILGIT). The Cytoplasmic portion of the chain corresponds to 201-230 (YARTIRYLWTSVDPMQDMSESRKAKRKVTK). Residues 231 to 251 (MIIIVAVLFCLCWLPHHLVIL) form a helical membrane-spanning segment. Over 252–268 (CMWFGHFPLNHTTYVLR) the chain is Extracellular. Residues 269 to 289 (ILSHLVAYANSCLNPIVYALV) traverse the membrane as a helical segment. The Cytoplasmic portion of the chain corresponds to 290–363 (SKHFRKGFKK…TSAFMTFNVT (74 aa)).

This sequence belongs to the G-protein coupled receptor 1 family. In terms of tissue distribution, expressed in neurons in the ventral area of the interpeduncular nucleus (IPN) where expression often overlaps with spx1.

It localises to the membrane. In terms of biological role, receptor for the hormone galanin. Receptor for the hormones spexin-1 and spexin-2. The chain is Galanin receptor 2a from Danio rerio (Zebrafish).